The chain runs to 318 residues: 2-keto-3-deoxygluconate permease (318 aa).

10 helical membrane passes run 10–30, 42–62, 82–102, 109–129, 139–159, 163–183, 201–221, 224–244, 257–277, and 288–308; these read LPGGMMLVPLLLGALCHTLWP, GLISGTVPILAVWFFCMGATI, IAVAWLVAVVCAPLLPIGGIP, LSVLALVAAMDMTNGGLYAAL, AGAVVLMSLESGPLISMLILG, LATFEPQLFVGAVLPLLLGFA, TLVPFFGFALGNTLDLSTIVH, ASGVLLGVAVIVITGLPLLLA, VAASSTAGAAVATPALIAGMA, and TALVASAVIVTSVLVPLLTAL.

The protein belongs to the KdgT transporter family.

The protein resides in the cell inner membrane. The catalysed reaction is 2-dehydro-3-deoxy-D-gluconate(in) + H(+)(in) = 2-dehydro-3-deoxy-D-gluconate(out) + H(+)(out). Functionally, catalyzes the proton-dependent uptake of 2-keto-3-deoxygluconate (KDG) into the cell. This is 2-keto-3-deoxygluconate permease from Xanthomonas oryzae pv. oryzae (strain MAFF 311018).